Here is a 37-residue protein sequence, read N- to C-terminus: Large ribosomal subunit protein bL36 (37 aa).

It belongs to the bacterial ribosomal protein bL36 family.

In Deinococcus deserti (strain DSM 17065 / CIP 109153 / LMG 22923 / VCD115), this protein is Large ribosomal subunit protein bL36.